The chain runs to 104 residues: Proteasome subunit beta type-8 (104 aa).

The protein belongs to the peptidase T1B family. As to quaternary structure, the 26S proteasome consists of a 20S proteasome core and two 19S regulatory subunits. The 20S proteasome core is composed of 28 subunits that are arranged in four stacked rings, resulting in a barrel-shaped structure. The two end rings are each formed by seven alpha subunits, and the two central rings are each formed by seven beta subunits. The catalytic chamber with the active sites is on the inside of the barrel. Component of the immunoproteasome, where it displaces the equivalent housekeeping subunit PSMB5. Component of the spermatoproteasome, a form of the proteasome specifically found in testis. Directly interacts with POMP.

The protein localises to the cytoplasm. It localises to the nucleus. The catalysed reaction is Cleavage of peptide bonds with very broad specificity.. In terms of biological role, the proteasome is a multicatalytic proteinase complex which is characterized by its ability to cleave peptides with Arg, Phe, Tyr, Leu, and Glu adjacent to the leaving group at neutral or slightly basic pH. The proteasome has an ATP-dependent proteolytic activity. This subunit is involved in antigen processing to generate class I binding peptides. May participate in the generation of spliced peptides resulting from the ligation of two separate proteasomal cleavage products that are not contiguous in the parental protein. Required for adipocyte differentiation. The polypeptide is Proteasome subunit beta type-8 (PSMB8) (Sus scrofa (Pig)).